Here is a 316-residue protein sequence, read N- to C-terminus: ATP synthase gamma chain (316 aa).

This sequence belongs to the ATPase gamma chain family. F-type ATPases have 2 components, CF(1) - the catalytic core - and CF(0) - the membrane proton channel. CF(1) has five subunits: alpha(3), beta(3), gamma(1), delta(1), epsilon(1). CF(0) has three main subunits: a, b and c.

It is found in the cellular thylakoid membrane. Its function is as follows. Produces ATP from ADP in the presence of a proton gradient across the membrane. The gamma chain is believed to be important in regulating ATPase activity and the flow of protons through the CF(0) complex. This Prochlorococcus marinus (strain MIT 9515) protein is ATP synthase gamma chain.